Consider the following 98-residue polypeptide: Small ribosomal subunit protein bS6 (98 aa).

This sequence belongs to the bacterial ribosomal protein bS6 family.

Functionally, binds together with bS18 to 16S ribosomal RNA. The chain is Small ribosomal subunit protein bS6 from Lactobacillus helveticus (strain DPC 4571).